The primary structure comprises 876 residues: MVKEKKKADKKGDKSARSPSSISDNPEASKQDSNASKQEVAPSAVVPVVETPLKQAPKRDSVQMEQSEEETQYEEPILTKLIVESYEGEKVRGLYEGEGFAVFQGGNTYHGMFSEGLMHGQGTYIWADGLKYEGDFVKNIPMNHGVYTWPDGSTYEGEVTNGMRNGFGMFKCGTQPVSYIGHWCHGKRHGKGSIYYNQEGTSWYEGDWVYNIKKGWGIRCYKSGNIYEGQWENNMRHGEGRMRWLTTNEEYTGHWEKGIQNGFGTHTWFLKRIPNSQYPLRNEYIGEFVNGFRHGQGKFYYASGAMYEGEWASNKKQGRGRMTFKNGHVYEGLFSNDHIAQFFETEMDYSQSLDRWSDASQRSRQPRGSSVSAVREPETLRKLDGSESRSVLGTSIELDLTLLLDMYPEESQEEEKKQVEYAVLRNITELRRIYCFYSGLGCDHSLDNTFLMTKLHFWRFLKDCRFHHHNITLADMDRVLSVYNGIPIEEIHSPFRTILLRTFLNYLLQLAYYIHHKEFQNRSPSLFLCFTKLMSENIHPHACQVKGHLFSEQQRTLYSMNYIDKCWEIYTAYCRPNEAPPYELTMKMRYFLWMLKDFRMINKDLTATKFMTVIAEDNPFVYDGTDSNFELELVFLEFFEALLCFSLCCMFDQMTRSYLKVPYDDITTNRYGSTQTILNQSIHRSPSAITSHDSEVHFSSTKSSLDKIGALPDGKIRQSEPKLKKSLSEDKVSKMNFKTQGRGLVFMSPQGEKYEKPKDEQKEKLNIWVNNLYVFFVSVLFSAYKREEMLKEKVKENQLQEAELAQQRQIENEELEARLNILREEEARKQDFELDITVLKEPSEIPASQPLTPSPPKEDLASIQTSKASPGKKKKK.

The segment covering 1 to 16 has biased composition (basic and acidic residues); the sequence is MVKEKKKADKKGDKSA. The tract at residues 1-71 is disordered; it reads MVKEKKKADK…VQMEQSEEET (71 aa). Residues 17 to 37 are compositionally biased toward polar residues; that stretch reads RSPSSISDNPEASKQDSNASK. Over residues 39-50 the composition is skewed to low complexity; sequence EVAPSAVVPVVE. 10 MORN repeats span residues 86 to 108, 109 to 129, 132 to 154, 155 to 172, 179 to 196, 204 to 225, 227 to 244, 251 to 268, 284 to 305, and 307 to 328; these read YEGEKVRGLYEGEGFAVFQGGNT, YHGMFSEGLMHGQGTYIWADG, YEGDFVKNIPMNHGVYTWPDGST, YEGEVTNGMRNGFGMFKC, YIGHWCHGKRHGKGSIYY, YEGDWVYNIKKGWGIRCYKSGN, YEGQWENNMRHGEGRMRW, YTGHWEKGIQNGFGTHTW, YIGEFVNGFRHGQGKFYYASGA, and YEGEWASNKKQGRGRMTFKNGH. A compositionally biased stretch (polar residues) spans 356 to 372; that stretch reads WSDASQRSRQPRGSSVS. A disordered region spans residues 356-386; it reads WSDASQRSRQPRGSSVSAVREPETLRKLDGS. Residues 375–386 are compositionally biased toward basic and acidic residues; the sequence is REPETLRKLDGS. Residues 790–832 adopt a coiled-coil conformation; it reads LKEKVKENQLQEAELAQQRQIENEELEARLNILREEEARKQDF. Positions 839-876 are disordered; the sequence is LKEPSEIPASQPLTPSPPKEDLASIQTSKASPGKKKKK.

As to quaternary structure, interacts with RSPH6A. Does not appear to be part of the axonemal radial spoke complexes 1 or 2. In terms of tissue distribution, expressed in ependymal cells (at protein level).

Its subcellular location is the cytoplasm. It localises to the cytoskeleton. The protein resides in the cilium axoneme. The protein localises to the cell projection. It is found in the cilium. Its subcellular location is the flagellum. May function as part of the axonemal radial spoke complex 3 (RS3). Radial spoke complexes are important for ciliary motility. This chain is Radial spoke head 10 homolog B, found in Mus musculus (Mouse).